Reading from the N-terminus, the 318-residue chain is Ubiquitin-conjugating enzyme E2 J1 (318 aa).

The Cytoplasmic segment spans residues 1–282 (METRYNLKSP…QGHQPRDNHT (282 aa)). One can recognise a UBC core domain in the interval 10–160 (PAVKRLMKEA…GCGSAMKDVL (151 aa)). Residue Cys91 is the Glycyl thioester intermediate of the active site. Position 184 is a phosphoserine; by MAPKAPK2 (Ser184). Residues 229–248 (LQNSSAASFHQPTQPVAKNT) are compositionally biased toward polar residues. The interval 229-283 (LQNSSAASFHQPTQPVAKNTSMSPRQRRAQQQSQRRLSTSPDVIQGHQPRDNHTD) is disordered. Residues 249–268 (SMSPRQRRAQQQSQRRLSTS) are compositionally biased toward low complexity. Ser266 and Ser268 each carry phosphoserine. The chain crosses the membrane as a helical; Anchor for type IV membrane protein span at residues 283–303 (DHGGSAVLIVILTLALAALIF). Residues 304–318 (RRIYLANEYIFDFEL) are Lumenal-facing.

Belongs to the ubiquitin-conjugating enzyme family. Component of the HRD1 complex, which comprises at least SYNV1/HRD1, DERL1/2, FAM8A1, HERPUD1/HERP, OS9, SEL1L and UBE2J1. Interacts with E3 ligase RNF26. Interacts with E3 ligase RNF133. Phosphorylated at Ser-184 in a cytosolic stress-dependent manner by MAP kinase p38 MAPKAPK2. In terms of processing, phosphorylated UBE2J1 is rapidly ubiquitinated and subsequently degraded by the proteasome. As to expression, expressed in testes.

It is found in the endoplasmic reticulum membrane. It carries out the reaction S-ubiquitinyl-[E1 ubiquitin-activating enzyme]-L-cysteine + [E2 ubiquitin-conjugating enzyme]-L-cysteine = [E1 ubiquitin-activating enzyme]-L-cysteine + S-ubiquitinyl-[E2 ubiquitin-conjugating enzyme]-L-cysteine.. It participates in protein modification; protein ubiquitination. In terms of biological role, catalyzes the covalent attachment of ubiquitin to other proteins. Functions in the selective degradation of misfolded membrane proteins from the endoplasmic reticulum (ERAD) and is essential for cells to recover from ER stress. Plays a role in MAPKAPK2-dependent translational control of TNF-alpha synthesis. Also acts as a platform for perinuclear positioning of the endosomal system by mediating ubiquitination of SQSTM1 through interaction with the E3 ubiquitin-protein ligase RNF26. Plays a role in male fecundity through the interaction with the E3 ubiquitin-protein ligase RNF133. Functionally, (Microbial infection) Promotes Dengue virus RNA replication by negatively regulating IFN-beta signaling and mediating 'Lys-48'-linked ubiquitination on IRF3. This is Ubiquitin-conjugating enzyme E2 J1 from Homo sapiens (Human).